Here is a 418-residue protein sequence, read N- to C-terminus: tRNA(Met) cytidine acetate ligase (418 aa).

ATP-binding residues include G95, N161, and R186.

This sequence belongs to the TmcAL family.

The protein resides in the cytoplasm. It carries out the reaction cytidine(34) in elongator tRNA(Met) + acetate + ATP = N(4)-acetylcytidine(34) in elongator tRNA(Met) + AMP + diphosphate. Its function is as follows. Catalyzes the formation of N(4)-acetylcytidine (ac(4)C) at the wobble position of elongator tRNA(Met), using acetate and ATP as substrates. First activates an acetate ion to form acetyladenylate (Ac-AMP) and then transfers the acetyl group to tRNA to form ac(4)C34. The sequence is that of tRNA(Met) cytidine acetate ligase from Thermotoga maritima (strain ATCC 43589 / DSM 3109 / JCM 10099 / NBRC 100826 / MSB8).